The sequence spans 350 residues: Putative deoxyribonuclease-2 (350 aa).

It belongs to the DNase II family.

The sequence is that of Putative deoxyribonuclease-2 from Burkholderia thailandensis (strain ATCC 700388 / DSM 13276 / CCUG 48851 / CIP 106301 / E264).